A 515-amino-acid chain; its full sequence is Transcription termination factor Rho (515 aa).

One can recognise a Rho RNA-BD domain in the interval 146-221 (DVLFTGVLDV…VKIKSINDQD (76 aa)). ATP contacts are provided by residues 264-269 (GKGQRA), 276-281 (KAGKTT), and Arg307.

It belongs to the Rho family. Homohexamer. The homohexamer assembles into an open ring structure.

Functionally, facilitates transcription termination by a mechanism that involves Rho binding to the nascent RNA, activation of Rho's RNA-dependent ATPase activity, and release of the mRNA from the DNA template. The sequence is that of Transcription termination factor Rho from Borreliella burgdorferi (strain ATCC 35210 / DSM 4680 / CIP 102532 / B31) (Borrelia burgdorferi).